The chain runs to 212 residues: Protein GrpE (212 aa).

The segment at 1 to 69 (MAEMSNNKTS…LESAKKEIES (69 aa)) is disordered. Positions 40 to 60 (ETTQTESMETAETETSLQTEL) are enriched in low complexity.

This sequence belongs to the GrpE family. As to quaternary structure, homodimer.

The protein localises to the cytoplasm. Its function is as follows. Participates actively in the response to hyperosmotic and heat shock by preventing the aggregation of stress-denatured proteins, in association with DnaK and GrpE. It is the nucleotide exchange factor for DnaK and may function as a thermosensor. Unfolded proteins bind initially to DnaJ; upon interaction with the DnaJ-bound protein, DnaK hydrolyzes its bound ATP, resulting in the formation of a stable complex. GrpE releases ADP from DnaK; ATP binding to DnaK triggers the release of the substrate protein, thus completing the reaction cycle. Several rounds of ATP-dependent interactions between DnaJ, DnaK and GrpE are required for fully efficient folding. The polypeptide is Protein GrpE (Leptospira interrogans serogroup Icterohaemorrhagiae serovar Lai (strain 56601)).